A 292-amino-acid polypeptide reads, in one-letter code: 4-hydroxy-tetrahydrodipicolinate synthase (292 aa).

Threonine 45 is a binding site for pyruvate. The active-site Proton donor/acceptor is tyrosine 133. Residue lysine 161 is the Schiff-base intermediate with substrate of the active site. Pyruvate is bound at residue isoleucine 203.

Belongs to the DapA family. In terms of assembly, homotetramer; dimer of dimers.

Its subcellular location is the cytoplasm. The catalysed reaction is L-aspartate 4-semialdehyde + pyruvate = (2S,4S)-4-hydroxy-2,3,4,5-tetrahydrodipicolinate + H2O + H(+). It participates in amino-acid biosynthesis; L-lysine biosynthesis via DAP pathway; (S)-tetrahydrodipicolinate from L-aspartate: step 3/4. Catalyzes the condensation of (S)-aspartate-beta-semialdehyde [(S)-ASA] and pyruvate to 4-hydroxy-tetrahydrodipicolinate (HTPA). This chain is 4-hydroxy-tetrahydrodipicolinate synthase, found in Acidiphilium cryptum (strain JF-5).